The following is a 448-amino-acid chain: Tubulin alpha-5 chain (448 aa).

Residues 1-4 (MREC) carry the MREC motif motif. Glutamine 11 provides a ligand contact to GTP. Lysine 40 is subject to N6-acetyllysine. Positions 71, 140, 144, 145, 179, 206, and 228 each coordinate GTP. Glutamate 71 serves as a coordination point for Mg(2+). The active site involves glutamate 254.

This sequence belongs to the tubulin family. As to quaternary structure, dimer of alpha and beta chains. A typical microtubule is a hollow water-filled tube with an outer diameter of 25 nm and an inner diameter of 15 nM. Alpha-beta heterodimers associate head-to-tail to form protofilaments running lengthwise along the microtubule wall with the beta-tubulin subunit facing the microtubule plus end conferring a structural polarity. Microtubules usually have 13 protofilaments but different protofilament numbers can be found in some organisms and specialized cells. Requires Mg(2+) as cofactor. Some glutamate residues at the C-terminus are polyglycylated, resulting in polyglycine chains on the gamma-carboxyl group. Glycylation is mainly limited to tubulin incorporated into axonemes (cilia and flagella) whereas glutamylation is prevalent in neuronal cells, centrioles, axonemes, and the mitotic spindle. Both modifications can coexist on the same protein on adjacent residues, and lowering polyglycylation levels increases polyglutamylation, and reciprocally. The precise function of polyglycylation is still unclear. In terms of processing, some glutamate residues at the C-terminus are polyglutamylated, resulting in polyglutamate chains on the gamma-carboxyl group. Polyglutamylation plays a key role in microtubule severing by spastin (SPAST). SPAST preferentially recognizes and acts on microtubules decorated with short polyglutamate tails: severing activity by SPAST increases as the number of glutamates per tubulin rises from one to eight, but decreases beyond this glutamylation threshold. Post-translationally, acetylation of alpha chains at Lys-40 is located inside the microtubule lumen. This modification has been correlated with increased microtubule stability, intracellular transport and ciliary assembly.

The protein resides in the cytoplasm. It is found in the cytoskeleton. The enzyme catalyses GTP + H2O = GDP + phosphate + H(+). In terms of biological role, tubulin is the major constituent of microtubules, a cylinder consisting of laterally associated linear protofilaments composed of alpha- and beta-tubulin heterodimers. Microtubules grow by the addition of GTP-tubulin dimers to the microtubule end, where a stabilizing cap forms. Below the cap, tubulin dimers are in GDP-bound state, owing to GTPase activity of alpha-tubulin. The chain is Tubulin alpha-5 chain from Gallus gallus (Chicken).